A 424-amino-acid chain; its full sequence is Protein CapL (424 aa).

The protein belongs to the UDP-glucose/GDP-mannose dehydrogenase family.

Its pathway is capsule biogenesis; capsule polysaccharide biosynthesis. Required for the biosynthesis of type 1 capsular polysaccharide. In Staphylococcus aureus, this protein is Protein CapL (capL).